We begin with the raw amino-acid sequence, 88 residues long: Thioredoxin-2 (88 aa).

Positions 2 to 88 constitute a Thioredoxin domain; that stretch reads SRVIHISSNE…YRNGAKVSEF (87 aa). Residues cysteine 31 and cysteine 34 each act as nucleophile in the active site. A disulfide bridge connects residues cysteine 31 and cysteine 34.

It belongs to the thioredoxin family.

Participates in various redox reactions through the reversible oxidation of its active center dithiol to a disulfide and catalyzes dithiol-disulfide exchange reactions. The protein is Thioredoxin-2 (trxB) of Dictyostelium discoideum (Social amoeba).